Reading from the N-terminus, the 184-residue chain is Holliday junction branch migration complex subunit RuvA (184 aa).

The tract at residues 1-64 is domain I; that stretch reads MIKAIEGIIT…EDANLLYGFI (64 aa). The tract at residues 65–137 is domain II; the sequence is KESEQRIFEM…LSDAKFGEIN (73 aa). A region of interest (flexible linker) is located at residue N137. The interval 138 to 184 is domain III; sequence SMPSYQNEAFMALESLGFKRDRISKVLNECSSNDTASLIKEALKKLA.

The protein belongs to the RuvA family. As to quaternary structure, homotetramer. Forms an RuvA(8)-RuvB(12)-Holliday junction (HJ) complex. HJ DNA is sandwiched between 2 RuvA tetramers; dsDNA enters through RuvA and exits via RuvB. An RuvB hexamer assembles on each DNA strand where it exits the tetramer. Each RuvB hexamer is contacted by two RuvA subunits (via domain III) on 2 adjacent RuvB subunits; this complex drives branch migration. In the full resolvosome a probable DNA-RuvA(4)-RuvB(12)-RuvC(2) complex forms which resolves the HJ.

The protein localises to the cytoplasm. Its function is as follows. The RuvA-RuvB-RuvC complex processes Holliday junction (HJ) DNA during genetic recombination and DNA repair, while the RuvA-RuvB complex plays an important role in the rescue of blocked DNA replication forks via replication fork reversal (RFR). RuvA specifically binds to HJ cruciform DNA, conferring on it an open structure. The RuvB hexamer acts as an ATP-dependent pump, pulling dsDNA into and through the RuvAB complex. HJ branch migration allows RuvC to scan DNA until it finds its consensus sequence, where it cleaves and resolves the cruciform DNA. In Campylobacter fetus subsp. fetus (strain 82-40), this protein is Holliday junction branch migration complex subunit RuvA.